The following is a 381-amino-acid chain: L-lactate dehydrogenase (381 aa).

One can recognise an FMN hydroxy acid dehydrogenase domain in the interval 1–380 (MIISSASDYR…KPEALVDLSK (380 aa)). A substrate-binding site is contributed by Tyr-24. Residues Ser-106 and Gln-127 each contribute to the FMN site. Tyr-129 serves as a coordination point for substrate. Thr-155 provides a ligand contact to FMN. Arg-164 is a substrate binding site. An FMN-binding site is contributed by Lys-251. Catalysis depends on His-275, which acts as the Proton acceptor. Arg-278 provides a ligand contact to substrate. FMN is bound at residue 306–330 (DSGIRNGLDIVRMLALGADATMLGR).

The protein belongs to the FMN-dependent alpha-hydroxy acid dehydrogenase family. FMN serves as cofactor.

It localises to the cell inner membrane. It carries out the reaction (S)-lactate + A = pyruvate + AH2. Catalyzes the conversion of L-lactate to pyruvate. Is coupled to the respiratory chain. This Haemophilus influenzae (strain 86-028NP) protein is L-lactate dehydrogenase.